The chain runs to 593 residues: Salivary alpha-glucosidase (593 aa).

The N-terminal stretch at 1–19 is a signal peptide; sequence MPPLGVLLLLVALGHSTQG. D49, D51, D53, I55, D57, and N130 together coordinate Ca(2+). N130 and N163 each carry an N-linked (GlcNAc...) asparagine glycan. Residues D201, Y235, L236, and E238 each coordinate Ca(2+). 6 N-linked (GlcNAc...) asparagine glycosylation sites follow: N295, N310, N338, N414, N445, and N453. N338 contacts N-acetyl-beta-D-glucosamine.

This sequence belongs to the glycosyl hydrolase 13 family. Saliva (at protein level). Proximal lateral lobes of the salivary gland (at protein level).

Its subcellular location is the secreted. The enzyme catalyses Hydrolysis of terminal, non-reducing (1-&gt;4)-linked alpha-D-glucose residues with release of alpha-D-glucose.. Functions as a glucosidase that shows high activity toward sucrose, a major component of nectar. Assists the mosquito in its sugar-feeding capabilities. The sequence is that of Salivary alpha-glucosidase from Anopheles gambiae (African malaria mosquito).